A 74-amino-acid polypeptide reads, in one-letter code: Toxin Td6 (74 aa).

Residues I1–E8 form the signal peptide. The region spanning K9 to G71 is the LCN-type CS-alpha/beta domain. Intrachain disulfides connect C19/C70, C23/C45, C31/C51, and C35/C53. Position 72 is an arginine amide (R72).

This sequence belongs to the long (4 C-C) scorpion toxin superfamily. Sodium channel inhibitor family. Beta subfamily. Expressed by the venom gland.

It is found in the secreted. Beta toxins bind voltage-independently at site-4 of sodium channels (Nav) and shift the voltage of activation toward more negative potentials thereby affecting sodium channel activation and promoting spontaneous and repetitive firing. This is Toxin Td6 from Tityus discrepans (Venezuelan scorpion).